A 601-amino-acid chain; its full sequence is Aspartate--tRNA ligase (601 aa).

Residue Glu-183 coordinates L-aspartate. The tract at residues 207 to 210 (QIFK) is aspartate. Arg-229 contributes to the L-aspartate binding site. ATP-binding positions include 229–231 (RDE) and Gln-238. His-457 is a binding site for L-aspartate. Glu-497 is an ATP binding site. An L-aspartate-binding site is contributed by Arg-504. 549-552 (GIDR) contributes to the ATP binding site.

It belongs to the class-II aminoacyl-tRNA synthetase family. Type 1 subfamily. In terms of assembly, homodimer.

Its subcellular location is the cytoplasm. The enzyme catalyses tRNA(Asp) + L-aspartate + ATP = L-aspartyl-tRNA(Asp) + AMP + diphosphate. Functionally, catalyzes the attachment of L-aspartate to tRNA(Asp) in a two-step reaction: L-aspartate is first activated by ATP to form Asp-AMP and then transferred to the acceptor end of tRNA(Asp). The sequence is that of Aspartate--tRNA ligase from Leptospira interrogans serogroup Icterohaemorrhagiae serovar copenhageni (strain Fiocruz L1-130).